The sequence spans 105 residues: UPF0145 protein HD_1349 (105 aa).

It belongs to the UPF0145 family.

The polypeptide is UPF0145 protein HD_1349 (Haemophilus ducreyi (strain 35000HP / ATCC 700724)).